The sequence spans 476 residues: Undecaprenyl-phosphate galactose phosphotransferase (476 aa).

Helical transmembrane passes span 15 to 35 (IFLAISDLIFFNLALWFSLGC), 52 to 72 (LDTRVITHFILSVVCVGWFWI), 93 to 113 (TIVIFAIFDLALIAFTKWQFS), 115 to 135 (YVWVFCWTFALILVPFFRALT), and 283 to 303 (FDIVCSIMILIIASPLMIYLW). Over 304–476 (YKVTRDGGPA…KVVLRRDGAY (173 aa)) the chain is Cytoplasmic.

Belongs to the bacterial sugar transferase family.

The protein localises to the cell inner membrane. The catalysed reaction is di-trans,octa-cis-undecaprenyl phosphate + UDP-alpha-D-galactose = alpha-D-galactosyl-di-trans,octa-cis-undecaprenyl diphosphate + UMP. The protein operates within bacterial outer membrane biogenesis; LPS O-antigen biosynthesis. Its function is as follows. Is responsible for transferring galactose-1-phosphate to the lipid precursor undecaprenol phosphate in the first steps of O-polysaccharide biosynthesis. In Salmonella typhimurium (strain LT2 / SGSC1412 / ATCC 700720), this protein is Undecaprenyl-phosphate galactose phosphotransferase (rfbP).